A 341-amino-acid chain; its full sequence is tRNA N6-adenosine threonylcarbamoyltransferase (341 aa).

Positions 111 and 115 each coordinate Fe cation. Substrate is bound by residues 134–138 (LVSGG), Asp-167, Gly-180, and Asn-276. Asp-304 is a Fe cation binding site.

It belongs to the KAE1 / TsaD family. It depends on Fe(2+) as a cofactor.

It is found in the cytoplasm. It catalyses the reaction L-threonylcarbamoyladenylate + adenosine(37) in tRNA = N(6)-L-threonylcarbamoyladenosine(37) in tRNA + AMP + H(+). Required for the formation of a threonylcarbamoyl group on adenosine at position 37 (t(6)A37) in tRNAs that read codons beginning with adenine. Is involved in the transfer of the threonylcarbamoyl moiety of threonylcarbamoyl-AMP (TC-AMP) to the N6 group of A37, together with TsaE and TsaB. TsaD likely plays a direct catalytic role in this reaction. This Ectopseudomonas mendocina (strain ymp) (Pseudomonas mendocina) protein is tRNA N6-adenosine threonylcarbamoyltransferase.